Here is a 266-residue protein sequence, read N- to C-terminus: Vitamin B12-binding protein (266 aa).

The first 22 residues, 1-22 (MVKQMFRALVALLLTLPVWLYA), serve as a signal peptide directing secretion. In terms of domain architecture, Fe/B12 periplasmic-binding spans 25 to 266 (RVITLSPANT…QLCNALSQVN (242 aa)). Residues Tyr-50 and 242–246 (DWFER) contribute to the cyanocob(III)alamin site. A disulfide bridge connects residues Cys-183 and Cys-259.

This sequence belongs to the BtuF family. The complex is composed of two ATP-binding proteins (BtuD), two transmembrane proteins (BtuC) and a solute-binding protein (BtuF).

The protein resides in the periplasm. Functionally, part of the ABC transporter complex BtuCDF involved in vitamin B12 import. Binds vitamin B12 and delivers it to the periplasmic surface of BtuC. In Salmonella choleraesuis (strain SC-B67), this protein is Vitamin B12-binding protein.